A 222-amino-acid polypeptide reads, in one-letter code: MIF4G domain-containing protein (222 aa).

Residues 3–205 (EPSREEYKIQ…LEIIEFRAAG (203 aa)) enclose the MIF4G domain.

It belongs to the MIF4GD family. As to quaternary structure, interacts with EIF4G1, EIF4G2 and SLBP; probably tethered by SLBP to the 3'-end of mRNAs ending with the histone stem-loop, it also interacts with EIF4G1 which is bound to their 5'-end.

Its subcellular location is the cytoplasm. It is found in the nucleus. Functions in replication-dependent translation of histone mRNAs which differ from other eukaryotic mRNAs in that they do not end with a poly-A tail but a stem-loop. May participate in circularizing those mRNAs specifically enhancing their translation. In Homo sapiens (Human), this protein is MIF4G domain-containing protein (MIF4GD).